Consider the following 421-residue polypeptide: ATP-dependent RNA helicase RhlB (421 aa).

Residues 9-37 (QKFSDFALHPVVVQALEKKGFYNCTPIQA) carry the Q motif motif. Residues 40-219 (LPLTLAGRDV…FEQMNNAEYV (180 aa)) enclose the Helicase ATP-binding domain. Residue 53-60 (AQTGTGKT) coordinates ATP. Residues 165 to 168 (DEAD) carry the DEAD box motif. The region spanning 245-390 (RLLQTLIEEE…VSKYNPDALL (146 aa)) is the Helicase C-terminal domain. Residues 390–421 (LSELPPPKRLSRPRTGNGPRRSGAPRNRRRTG) are disordered. Over residues 405–414 (GNGPRRSGAP) the composition is skewed to low complexity.

This sequence belongs to the DEAD box helicase family. RhlB subfamily. In terms of assembly, component of the RNA degradosome, which is a multiprotein complex involved in RNA processing and mRNA degradation.

Its subcellular location is the cytoplasm. The catalysed reaction is ATP + H2O = ADP + phosphate + H(+). Its function is as follows. DEAD-box RNA helicase involved in RNA degradation. Has RNA-dependent ATPase activity and unwinds double-stranded RNA. The sequence is that of ATP-dependent RNA helicase RhlB from Cronobacter sakazakii (strain ATCC BAA-894) (Enterobacter sakazakii).